The following is a 373-amino-acid chain: tRNA-specific 2-thiouridylase MnmA (373 aa).

ATP-binding positions include 12 to 19 and M38; that span reads GMSGGVDS. Positions 98–100 are interaction with target base in tRNA; it reads NPD. C103 (nucleophile) is an active-site residue. C103 and C200 are disulfide-bonded. Position 127 (G127) interacts with ATP. The segment at 150 to 152 is interaction with tRNA; that stretch reads KDQ. The active-site Cysteine persulfide intermediate is the C200. The interval 312–313 is interaction with tRNA; it reads RY.

The protein belongs to the MnmA/TRMU family.

It is found in the cytoplasm. It catalyses the reaction S-sulfanyl-L-cysteinyl-[protein] + uridine(34) in tRNA + AH2 + ATP = 2-thiouridine(34) in tRNA + L-cysteinyl-[protein] + A + AMP + diphosphate + H(+). In terms of biological role, catalyzes the 2-thiolation of uridine at the wobble position (U34) of tRNA, leading to the formation of s(2)U34. This is tRNA-specific 2-thiouridylase MnmA from Streptococcus pneumoniae (strain ATCC BAA-255 / R6).